We begin with the raw amino-acid sequence, 288 residues long: Structure-specific endonuclease subunit SLX1 (288 aa).

The GIY-YIG domain maps to 7-90 (PFYGVYLLQS…QHPNMTRLIT (84 aa)).

It belongs to the SLX1 family. In terms of assembly, forms a heterodimer with SLX4. Requires a divalent metal cation as cofactor.

It localises to the nucleus. Functionally, catalytic subunit of the SLX1-SLX4 structure-specific endonuclease that resolves DNA secondary structures generated during DNA repair and recombination. Has endonuclease activity towards branched DNA substrates, introducing single-strand cuts in duplex DNA close to junctions with ss-DNA. The chain is Structure-specific endonuclease subunit SLX1 from Yarrowia lipolytica (strain CLIB 122 / E 150) (Yeast).